The primary structure comprises 628 residues: Somatic embryogenesis receptor kinase 2 (628 aa).

The first 29 residues, 1–29, serve as a signal peptide directing secretion; sequence MGRKKFEAFGFVCLISLLLLFNSLWLASS. Residues 30–241 lie on the Extracellular side of the membrane; the sequence is NMEGDALHSL…PTPGGYSATG (212 aa). Residues 45–85 form a PSKR1 binding region; the sequence is DPNNVLQSWDPTLVNPCTWFHVTCNNENSVIRVDLGNADLS. The tract at residues 56 to 58 is CLE44 binding; that stretch reads TLV. A disulfide bridge connects residues C61 and C68. Leucine-rich repeat receptor-like protein kinase binding stretches follow at residues 62 to 81 and 100 to 105; these read TWFH…DLGN and YLELYS. Position 64 to 65 (64 to 65) interacts with brassinolide; sequence FH. LRR repeat units lie at residues 95–119, 121–143, 144–167, and 168–192; these read LKNL…LGNL, NLVS…LGKL, FKLR…LTNI, and MTLQ…SFSL. N-linked (GlcNAc...) asparagine glycans are attached at residues N107 and N118. 2 leucine-rich repeat receptor-like protein kinase binding regions span residues 126–129 and 148–150; these read DLYL and FLR. N-linked (GlcNAc...) asparagine glycans are attached at residues N153 and N187. The leucine-rich repeat receptor-like protein kinase binding stretch occupies residues 174-197; that stretch reads DLSNNRLSGSVPDNGSFSLFTPIS. Residues C205 and C213 are joined by a disulfide bond. Residues 242–262 form a helical membrane-spanning segment; sequence AIAGGVAAGAALLFAAPALAF. Topologically, residues 263–628 are cytoplasmic; that stretch reads AWWRRRKPQE…LHAMELSGPR (366 aa). T302 is subject to Phosphothreonine. A Protein kinase domain is found at 305–592; sequence FSNKNILGRG…GLAEKWDEWQ (288 aa). Position 311–319 (311–319) interacts with ATP; the sequence is LGRGGFGKV. T328 is subject to Phosphothreonine. K333 contacts ATP. S386 and S389 each carry phosphoserine. Catalysis depends on D432, which acts as the Proton acceptor. Phosphothreonine is present on residues T462, T465, T466, and T471. Y479 is subject to Phosphotyrosine. S481 carries the post-translational modification Phosphoserine. Position 482 is a phosphothreonine (T482). At S486 the chain carries Phosphoserine. T562 is modified (phosphothreonine). S604 carries the phosphoserine modification. Residue T616 is modified to Phosphothreonine. S625 is subject to Phosphoserine.

This sequence belongs to the protein kinase superfamily. Ser/Thr protein kinase family. Homo- and heterodimer. Component of the SERK1 signaling complex, composed of KAPP, CDC48A, GRF6 or GRF7, SERK1, SERK2, SERK3/BAK1 and BRI1. Bind to BRI1 in a brassinolide-dependent manner. Heterodimer with PSKR1. Interacts with the EF-Tu receptor EFR and FLS2 in a specific ligand-induced manner. Interacts with ERECTA in a EPF2-induced manner. Interacts with ERL1 in a EPF1-induced manner. Interacts with TMM. In the presence of the signal peptide RGF1, interacts with RGI3/RGFR1 and RGI4/RGFR2/SKM2. Binds to the peptide CLE44 in the presence of TDR. Post-translationally, autophosphorylated. As to expression, expressed in flowers, tapetum, developing microspores, all cells of the embryo sac, provascular strands and developing vascular bundles. Low expression in adult vascular tissue.

The protein localises to the cell membrane. It carries out the reaction L-seryl-[protein] + ATP = O-phospho-L-seryl-[protein] + ADP + H(+). The catalysed reaction is L-threonyl-[protein] + ATP = O-phospho-L-threonyl-[protein] + ADP + H(+). Its function is as follows. Serine/threonine-kinase involved in brassinosteroid-dependent and -independent signaling pathways. Acts redundantly with SERK1 as a control point for sporophytic development controlling male gametophyte production. Serves as coreceptor to small peptide (e.g. RGF1 and CLE44) signaling. Involved in the perception of phytosulfokine and subsequent signal transduction. This chain is Somatic embryogenesis receptor kinase 2, found in Arabidopsis thaliana (Mouse-ear cress).